Here is a 313-residue protein sequence, read N- to C-terminus: Porphobilinogen deaminase (313 aa).

C242 is subject to S-(dipyrrolylmethanemethyl)cysteine.

This sequence belongs to the HMBS family. As to quaternary structure, monomer. Requires dipyrromethane as cofactor.

The catalysed reaction is 4 porphobilinogen + H2O = hydroxymethylbilane + 4 NH4(+). The protein operates within porphyrin-containing compound metabolism; protoporphyrin-IX biosynthesis; coproporphyrinogen-III from 5-aminolevulinate: step 2/4. Functionally, tetrapolymerization of the monopyrrole PBG into the hydroxymethylbilane pre-uroporphyrinogen in several discrete steps. This chain is Porphobilinogen deaminase, found in Escherichia coli (strain SE11).